We begin with the raw amino-acid sequence, 584 residues long: Arginine--tRNA ligase (584 aa).

The 'HIGH' region signature appears at 130-140 (PNVAKEMHVGH).

It belongs to the class-I aminoacyl-tRNA synthetase family. Monomer.

It localises to the cytoplasm. The enzyme catalyses tRNA(Arg) + L-arginine + ATP = L-arginyl-tRNA(Arg) + AMP + diphosphate. This is Arginine--tRNA ligase from Protochlamydia amoebophila (strain UWE25).